Consider the following 116-residue polypeptide: Fluoride-specific ion channel FluC 1 (116 aa).

The next 4 membrane-spanning stretches (helical) occupy residues Leu-2–Ile-22, Pro-33–Leu-53, Ile-63–Leu-83, and Trp-96–Ile-116. Gly-71 and Thr-74 together coordinate Na(+).

This sequence belongs to the fluoride channel Fluc/FEX (TC 1.A.43) family.

The protein localises to the cell membrane. It carries out the reaction fluoride(in) = fluoride(out). Its activity is regulated as follows. Na(+) is not transported, but it plays an essential structural role and its presence is essential for fluoride channel function. Functionally, fluoride-specific ion channel. Important for reducing fluoride concentration in the cell, thus reducing its toxicity. This Lactiplantibacillus plantarum (strain ATCC BAA-793 / NCIMB 8826 / WCFS1) (Lactobacillus plantarum) protein is Fluoride-specific ion channel FluC 1.